The sequence spans 49 residues: Large ribosomal subunit protein bL33B (49 aa).

Belongs to the bacterial ribosomal protein bL33 family.

The polypeptide is Large ribosomal subunit protein bL33B (Lactobacillus helveticus (strain DPC 4571)).